We begin with the raw amino-acid sequence, 47 residues long: Sperm protamine P1 (47 aa).

It belongs to the protamine P1 family. In terms of tissue distribution, testis.

It localises to the nucleus. The protein resides in the chromosome. Its function is as follows. Protamines substitute for histones in the chromatin of sperm during the haploid phase of spermatogenesis. They compact sperm DNA into a highly condensed, stable and inactive complex. The chain is Sperm protamine P1 (PRM1) from Orcinus orca (Killer whale).